We begin with the raw amino-acid sequence, 85 residues long: RDS3 complex subunit 10 (85 aa).

In terms of assembly, belongs to the SF3b complex composed of CUS1, HSH49, HSH155, RCP1, RDS3 and RSE1.

The protein localises to the nucleus. Functionally, involved in pre-mRNA splicing. Required for the SF3b integrity and prespliceosome assembly. The protein is RDS3 complex subunit 10 (YSF3) of Saccharomyces cerevisiae (strain ATCC 204508 / S288c) (Baker's yeast).